The chain runs to 246 residues: Probable transcriptional regulatory protein Ent638_2432 (246 aa).

It belongs to the TACO1 family.

It localises to the cytoplasm. The polypeptide is Probable transcriptional regulatory protein Ent638_2432 (Enterobacter sp. (strain 638)).